Reading from the N-terminus, the 84-residue chain is Small nuclear ribonucleoprotein E (84 aa).

Positions 13–84 (INFIFKLLQQ…GDNITLIQAI (72 aa)) constitute a Sm domain.

The protein belongs to the snRNP Sm proteins family. In terms of assembly, component of the Sm core complex, present in spliceosomal snRNP U1, U2, U4/U6 and U5. The core complex contains smb1, smd1, smd2, smd3, sme1, smf1 and smg1 (Sm proteins B, D1, D2, D3, E, F and G, respectively), and is probably a heptameric ring structure.

The protein localises to the cytoplasm. It localises to the nucleus. Involved in pre-mRNA splicing. Binds and is required for the stability of snRNA U1, U2, U4 and U5 which contain a highly conserved structural motif called the Sm binding site. Involved in cap modification. This Schizosaccharomyces pombe (strain 972 / ATCC 24843) (Fission yeast) protein is Small nuclear ribonucleoprotein E.